The chain runs to 167 residues: Putative lipoprotein YteS (167 aa).

Residues Met-1–Ser-20 form the signal peptide. Cys-21 is lipidated: N-palmitoyl cysteine. Residue Cys-21 is the site of S-diacylglycerol cysteine attachment.

The protein resides in the cell membrane. Its function is as follows. May play a role in the degradation of type I rhamnogalacturonan derived from plant cell walls. The polypeptide is Putative lipoprotein YteS (yteS) (Bacillus subtilis (strain 168)).